The chain runs to 156 residues: Probable inactive ribonuclease-like protein 13 (156 aa).

The N-terminal stretch at 1 to 20 is a signal peptide; that stretch reads MAPAVTRLLFLQLVLGPTLV. Asn-126 carries N-linked (GlcNAc...) asparagine glycosylation.

It belongs to the pancreatic ribonuclease family.

It is found in the secreted. Its function is as follows. Does not exhibit any ribonuclease activity. This Homo sapiens (Human) protein is Probable inactive ribonuclease-like protein 13 (RNASE13).